The sequence spans 274 residues: Deoxyribonuclease TATDN3 (274 aa).

The Zn(2+) site is built by histidine 12, histidine 14, glutamate 107, histidine 147, histidine 170, and aspartate 218.

This sequence belongs to the metallo-dependent hydrolases superfamily. TatD-type hydrolase family. Mn(2+) is required as a cofactor. The cofactor is Ca(2+). It depends on Mg(2+) as a cofactor. Requires Zn(2+) as cofactor.

The protein resides in the nucleus. The 3'-exonuclease activity is sensitive to the metal ion present in the active site, whereas the AP endodeoxyribonuclease activity is observed in a variety of divalent metal cofactors. 3'-exoxonuclease activity is suppressed in the presence of Ca(2+), Zn(2+) and Ni(2+). In terms of biological role, exhibits 3'-exonuclease activities and apurinic/apyrimidinic (AP) endonuclease (in vitro). Show preferential AP endonuclease activity on double-stranded DNA substrates and 3'- exonuclease activity on single-stranded DNA. This is Deoxyribonuclease TATDN3 (TATDN3) from Homo sapiens (Human).